The following is a 164-amino-acid chain: Cyclic pyranopterin monophosphate synthase (164 aa).

Substrate contacts are provided by residues 75 to 77 (MAH) and 112 to 113 (ME). Residue D127 is part of the active site.

It belongs to the MoaC family. As to quaternary structure, homohexamer; trimer of dimers.

It carries out the reaction (8S)-3',8-cyclo-7,8-dihydroguanosine 5'-triphosphate = cyclic pyranopterin phosphate + diphosphate. The protein operates within cofactor biosynthesis; molybdopterin biosynthesis. Catalyzes the conversion of (8S)-3',8-cyclo-7,8-dihydroguanosine 5'-triphosphate to cyclic pyranopterin monophosphate (cPMP). The polypeptide is Cyclic pyranopterin monophosphate synthase (Desulforamulus reducens (strain ATCC BAA-1160 / DSM 100696 / MI-1) (Desulfotomaculum reducens)).